A 291-amino-acid chain; its full sequence is Cytochrome c-552 (291 aa).

A signal peptide spans 1–23 (MKKTLMASAVGAVIAFGTHGAMA). The heme c site is built by Cys68, Cys71, His72, Cys157, Cys161, and His162.

Post-translationally, binds 2 heme c groups per subunit.

Its subcellular location is the periplasm. Its function is as follows. May play a role in nitrite reduction. Shows peroxidase activity on proteolytic modification. In Stutzerimonas stutzeri (Pseudomonas stutzeri), this protein is Cytochrome c-552 (nirB).